Consider the following 257-residue polypeptide: TLC domain-containing protein 3A (257 aa).

The next 7 membrane-spanning stretches (helical) occupy residues 1–21, 42–62, 77–97, 113–135, 142–162, 181–201, and 220–240; these read MLLT…LCTW, LVSS…IRSC, VWFL…CEWC, FLSR…VPVA, LGDF…FVSL, GILT…FMYW, and FYCN…FCLL. The TLC domain maps to 33-249; sequence TDCVMISTRL…LCRKAVRLFD (217 aa).

In terms of assembly, interacts with GGT7 isoform 3 and SLC3A2. In terms of tissue distribution, highly expressed in pancreas. Detected at intermediate levels in heart, placenta and kidney, and at low levels in brain, liver and skeletal muscle. Not detected in normal lung.

The protein resides in the cell membrane. This Homo sapiens (Human) protein is TLC domain-containing protein 3A.